The chain runs to 388 residues: Large ribosomal subunit protein uL3B (388 aa).

The span at 1 to 10 shows a compositional bias: basic and acidic residues; it reads MSHCKFEQPR. Positions 1 to 34 are disordered; the sequence is MSHCKFEQPRHGSLGFLPRKRASRQRGKVKAFPK. Residues 18–31 are compositionally biased toward basic residues; the sequence is PRKRASRQRGKVKA.

This sequence belongs to the universal ribosomal protein uL3 family. In terms of assembly, component of the large ribosomal subunit (LSU). Mature yeast ribosomes consist of a small (40S) and a large (60S) subunit. The 40S small subunit contains 1 molecule of ribosomal RNA (18S rRNA) and at least 33 different proteins. The large 60S subunit contains 3 rRNA molecules (25S, 5.8S and 5S rRNA) and at least 46 different proteins. uL3 forms together with ES39L one of the contact sites for the signal recognition particle that targets ribosomes to the endoplasmic reticulum membrane.

The protein resides in the cytoplasm. Component of the ribosome, a large ribonucleoprotein complex responsible for the synthesis of proteins in the cell. The small ribosomal subunit (SSU) binds messenger RNAs (mRNAs) and translates the encoded message by selecting cognate aminoacyl-transfer RNA (tRNA) molecules. The large subunit (LSU) contains the ribosomal catalytic site termed the peptidyl transferase center (PTC), which catalyzes the formation of peptide bonds, thereby polymerizing the amino acids delivered by tRNAs into a polypeptide chain. The nascent polypeptides leave the ribosome through a tunnel in the LSU and interact with protein factors that function in enzymatic processing, targeting, and the membrane insertion of nascent chains at the exit of the ribosomal tunnel. uL3 plays a role in coordinating processes of accommodating the aminoacyl-tRNA in the PTC. The chain is Large ribosomal subunit protein uL3B (rpl302) from Schizosaccharomyces pombe (strain 972 / ATCC 24843) (Fission yeast).